Reading from the N-terminus, the 381-residue chain is Deoxyguanosinetriphosphate triphosphohydrolase-like protein (381 aa).

Residues 76–203 (RMTHTLEVAG…ADLSDEIAYT (128 aa)) enclose the HD domain.

The protein belongs to the dGTPase family. Type 2 subfamily.

This is Deoxyguanosinetriphosphate triphosphohydrolase-like protein from Leptospira borgpetersenii serovar Hardjo-bovis (strain JB197).